Here is a 141-residue protein sequence, read N- to C-terminus: Acetyltransferase YPN_1354 (141 aa).

Residues 1-141 (MEIRIFQQDD…GKRLIVDQEY (141 aa)) form the N-acetyltransferase domain.

Belongs to the acetyltransferase family. YpeA subfamily.

In Yersinia pestis bv. Antiqua (strain Nepal516), this protein is Acetyltransferase YPN_1354.